The sequence spans 247 residues: Uridylate kinase (247 aa).

Lys16–Gly19 is a binding site for ATP. Gly58 lines the UMP pocket. ATP-binding residues include Gly59 and Arg63. UMP contacts are provided by residues Asp78 and Thr139–Thr146. Positions 166, 172, and 175 each coordinate ATP.

Belongs to the UMP kinase family. Homohexamer.

It localises to the cytoplasm. The catalysed reaction is UMP + ATP = UDP + ADP. Its pathway is pyrimidine metabolism; CTP biosynthesis via de novo pathway; UDP from UMP (UMPK route): step 1/1. Its activity is regulated as follows. Inhibited by UTP. In terms of biological role, catalyzes the reversible phosphorylation of UMP to UDP. The sequence is that of Uridylate kinase from Xylella fastidiosa (strain 9a5c).